We begin with the raw amino-acid sequence, 316 residues long: Large ribosomal subunit protein uL10 (316 aa).

The disordered stretch occupies residues 289–316; it reads AAAAAPAKEAPKEESEESDEDMGFGLFD.

Belongs to the universal ribosomal protein uL10 family. In terms of assembly, P0 forms a pentameric complex by interaction with dimers of P1 and P2. Phosphorylated.

It is found in the nucleus. The protein localises to the cytoplasm. Ribosomal protein P0 is the functional equivalent of E.coli protein L10. In Gallus gallus (Chicken), this protein is Large ribosomal subunit protein uL10 (RPLP0).